Consider the following 111-residue polypeptide: MESSAKLTSVRLSPRKTRLVVDLVRGKVIQEALNTLRFLPQPSAKLVSKLLQSAVANAEQKGVSDVDALYVKTIYVDGGSVLKRFLPRAMGRASKIRKPTSHISVTLSDSK.

It belongs to the universal ribosomal protein uL22 family. Part of the 50S ribosomal subunit.

In terms of biological role, this protein binds specifically to 23S rRNA; its binding is stimulated by other ribosomal proteins, e.g. L4, L17, and L20. It is important during the early stages of 50S assembly. It makes multiple contacts with different domains of the 23S rRNA in the assembled 50S subunit and ribosome. Functionally, the globular domain of the protein is located near the polypeptide exit tunnel on the outside of the subunit, while an extended beta-hairpin is found that lines the wall of the exit tunnel in the center of the 70S ribosome. The protein is Large ribosomal subunit protein uL22 of Pelobacter propionicus (strain DSM 2379 / NBRC 103807 / OttBd1).